A 139-amino-acid polypeptide reads, in one-letter code: MRAAAPALSLLLCCTAPANAQQPEPDCRKAVSQMDLNICADQDYRAADAELNKTYRLVVAAMQATDKELGDIDAAYAGALEALKKAQRAWIGYRDGQCELAGFEARGGSMEPMLVSGCLAELTRKRTAELKELMESAEN.

This sequence to E.coli YecT.

This is an uncharacterized protein from Rhizobium meliloti (strain 1021) (Ensifer meliloti).